A 345-amino-acid chain; its full sequence is uncharacterized protein (345 aa).

The protein localises to the plastid. Its subcellular location is the chloroplast. This is an uncharacterized protein from Chlamydomonas moewusii (Chlamydomonas eugametos).